A 229-amino-acid polypeptide reads, in one-letter code: Orotate phosphoribosyltransferase (229 aa).

Residues Arg107, Lys108, Lys111, His113, and 133-141 (EDLTTAGGS) each bind 5-phospho-alpha-D-ribose 1-diphosphate. Thr137 contacts orotate.

The protein belongs to the purine/pyrimidine phosphoribosyltransferase family. PyrE subfamily. Homodimer. Mg(2+) is required as a cofactor.

The enzyme catalyses orotidine 5'-phosphate + diphosphate = orotate + 5-phospho-alpha-D-ribose 1-diphosphate. Its pathway is pyrimidine metabolism; UMP biosynthesis via de novo pathway; UMP from orotate: step 1/2. Functionally, catalyzes the transfer of a ribosyl phosphate group from 5-phosphoribose 1-diphosphate to orotate, leading to the formation of orotidine monophosphate (OMP). The polypeptide is Orotate phosphoribosyltransferase (Rhizobium etli (strain ATCC 51251 / DSM 11541 / JCM 21823 / NBRC 15573 / CFN 42)).